The sequence spans 59 residues: UPF0434 protein Shew_1640 (59 aa).

It belongs to the UPF0434 family.

The sequence is that of UPF0434 protein Shew_1640 from Shewanella loihica (strain ATCC BAA-1088 / PV-4).